The sequence spans 136 residues: Large ribosomal subunit protein uL16 (136 aa).

This sequence belongs to the universal ribosomal protein uL16 family. As to quaternary structure, part of the 50S ribosomal subunit.

Its function is as follows. Binds 23S rRNA and is also seen to make contacts with the A and possibly P site tRNAs. This Rickettsia canadensis (strain McKiel) protein is Large ribosomal subunit protein uL16.